The sequence spans 293 residues: Glycine--tRNA ligase alpha subunit (293 aa).

This sequence belongs to the class-II aminoacyl-tRNA synthetase family. In terms of assembly, tetramer of two alpha and two beta subunits.

The protein localises to the cytoplasm. It catalyses the reaction tRNA(Gly) + glycine + ATP = glycyl-tRNA(Gly) + AMP + diphosphate. The polypeptide is Glycine--tRNA ligase alpha subunit (Sulfurimonas denitrificans (strain ATCC 33889 / DSM 1251) (Thiomicrospira denitrificans (strain ATCC 33889 / DSM 1251))).